A 424-amino-acid chain; its full sequence is UDP-N-acetylglucosamine 1-carboxyvinyltransferase (424 aa).

22–23 (KN) serves as a coordination point for phosphoenolpyruvate. Arg-96 contacts UDP-N-acetyl-alpha-D-glucosamine. Cys-120 (proton donor) is an active-site residue. The residue at position 120 (Cys-120) is a 2-(S-cysteinyl)pyruvic acid O-phosphothioketal. UDP-N-acetyl-alpha-D-glucosamine is bound by residues 125–129 (RPVDQ), Asp-312, and Ile-334.

The protein belongs to the EPSP synthase family. MurA subfamily.

It is found in the cytoplasm. It catalyses the reaction phosphoenolpyruvate + UDP-N-acetyl-alpha-D-glucosamine = UDP-N-acetyl-3-O-(1-carboxyvinyl)-alpha-D-glucosamine + phosphate. It functions in the pathway cell wall biogenesis; peptidoglycan biosynthesis. In terms of biological role, cell wall formation. Adds enolpyruvyl to UDP-N-acetylglucosamine. In Polynucleobacter asymbioticus (strain DSM 18221 / CIP 109841 / QLW-P1DMWA-1) (Polynucleobacter necessarius subsp. asymbioticus), this protein is UDP-N-acetylglucosamine 1-carboxyvinyltransferase.